Here is a 406-residue protein sequence, read N- to C-terminus: Phosphopentomutase (406 aa).

Mn(2+) is bound by residues aspartate 10, aspartate 305, histidine 310, aspartate 346, histidine 347, and histidine 358.

The protein belongs to the phosphopentomutase family. Mn(2+) serves as cofactor.

The protein localises to the cytoplasm. The catalysed reaction is 2-deoxy-alpha-D-ribose 1-phosphate = 2-deoxy-D-ribose 5-phosphate. It catalyses the reaction alpha-D-ribose 1-phosphate = D-ribose 5-phosphate. It participates in carbohydrate degradation; 2-deoxy-D-ribose 1-phosphate degradation; D-glyceraldehyde 3-phosphate and acetaldehyde from 2-deoxy-alpha-D-ribose 1-phosphate: step 1/2. Isomerase that catalyzes the conversion of deoxy-ribose 1-phosphate (dRib-1-P) and ribose 1-phosphate (Rib-1-P) to deoxy-ribose 5-phosphate (dRib-5-P) and ribose 5-phosphate (Rib-5-P), respectively. This Rhizobium etli (strain ATCC 51251 / DSM 11541 / JCM 21823 / NBRC 15573 / CFN 42) protein is Phosphopentomutase.